The following is a 190-amino-acid chain: Peptide methionine sulfoxide reductase MsrA (190 aa).

Residue Cys21 is part of the active site.

The protein belongs to the MsrA Met sulfoxide reductase family.

It carries out the reaction L-methionyl-[protein] + [thioredoxin]-disulfide + H2O = L-methionyl-(S)-S-oxide-[protein] + [thioredoxin]-dithiol. The enzyme catalyses [thioredoxin]-disulfide + L-methionine + H2O = L-methionine (S)-S-oxide + [thioredoxin]-dithiol. In terms of biological role, has an important function as a repair enzyme for proteins that have been inactivated by oxidation. Catalyzes the reversible oxidation-reduction of methionine sulfoxide in proteins to methionine. The sequence is that of Peptide methionine sulfoxide reductase MsrA from Polynucleobacter asymbioticus (strain DSM 18221 / CIP 109841 / QLW-P1DMWA-1) (Polynucleobacter necessarius subsp. asymbioticus).